A 144-amino-acid chain; its full sequence is Glycine-rich protein HC1 (144 aa).

A helical transmembrane segment spans residues 5–25; sequence IFLLLGLSIAFAILISSEVAA. 11 consecutive repeat copies span residues 37–42, 43–48, 50–55, 56–61, 63–68, 69–74, 76–81, 82–87, 89–94, 102–107, and 108–113. The interval 37–113 is 11 X 6 AA tandem repeats of G-Y-[NH]-N-G -G; that stretch reads GYNNGGGYHN…NNGGGYHGGG (77 aa).

It belongs to the GRP family.

Its subcellular location is the membrane. The chain is Glycine-rich protein HC1 from Oxybasis rubra (Red goosefoot).